A 143-amino-acid polypeptide reads, in one-letter code: Peptide methionine sulfoxide reductase MsrB (143 aa).

One can recognise a MsrB domain in the interval 16–139 (DAELRRRLTP…NSAALNFESR (124 aa)). 4 residues coordinate Zn(2+): cysteine 55, cysteine 58, cysteine 104, and cysteine 107. Cysteine 128 functions as the Nucleophile in the catalytic mechanism.

Belongs to the MsrB Met sulfoxide reductase family. The cofactor is Zn(2+).

The enzyme catalyses L-methionyl-[protein] + [thioredoxin]-disulfide + H2O = L-methionyl-(R)-S-oxide-[protein] + [thioredoxin]-dithiol. In Burkholderia ambifaria (strain MC40-6), this protein is Peptide methionine sulfoxide reductase MsrB.